We begin with the raw amino-acid sequence, 277 residues long: MKVISSIQELRDQLRGQNRTAFVPTMGNLHEGHLSLMRLARQHGDPVVASIFVNRLQFGPNEDFDKYPRTLEADIEKLQKENVYVLFAPTERDMYPQPQEYRVHPPHDLGDILEGEFRPGFFTGVCTVVMKLMSCVQPRVAVFGKKDYQQLMIVRAMTEQFALPTDIVAAETVRDTDGLALSSRNRYLTQTERAEAPMLAATLQGVRQAVLSGNRDFAKLERDAMASLAARGWKPDYIAIRKRSNLIAPAAQDLDAPLVVLAAAKLGATRLIDNLEI.

An ATP-binding site is contributed by 26-33; sequence MGNLHEGH. His33 acts as the Proton donor in catalysis. Gln57 is a binding site for (R)-pantoate. Gln57 is a beta-alanine binding site. Residue 144-147 coordinates ATP; that stretch reads GKKD. Residue Gln150 participates in (R)-pantoate binding. Residues Val173 and 181-184 each bind ATP; that span reads LSSR.

Belongs to the pantothenate synthetase family. Homodimer.

Its subcellular location is the cytoplasm. The catalysed reaction is (R)-pantoate + beta-alanine + ATP = (R)-pantothenate + AMP + diphosphate + H(+). It functions in the pathway cofactor biosynthesis; (R)-pantothenate biosynthesis; (R)-pantothenate from (R)-pantoate and beta-alanine: step 1/1. Its function is as follows. Catalyzes the condensation of pantoate with beta-alanine in an ATP-dependent reaction via a pantoyl-adenylate intermediate. This is Pantothenate synthetase from Paraburkholderia phymatum (strain DSM 17167 / CIP 108236 / LMG 21445 / STM815) (Burkholderia phymatum).